A 426-amino-acid polypeptide reads, in one-letter code: Protein EARLY STARVATION 1, chloroplastic (426 aa).

The N-terminal 58 residues, 1–58 (MSEMAASSAISLLDIKLRRFGVGASNHELRLTKWFKGDQAGAPTRRFTCFADMLAPIR), are a transit peptide targeting the chloroplast. Disordered regions lie at residues 106–127 (CTPR…TGIA) and 396–426 (QPRE…DQPQ). A compositionally biased stretch (basic and acidic residues) spans 118 to 127 (TPPKRDTGIA). Positions 412–426 (PSPPPEPDLPPDQPQ) are enriched in pro residues.

Belongs to the ESV1 family.

It localises to the plastid. The protein localises to the chloroplast stroma. Its subcellular location is the plastid stroma. In terms of biological role, binds preferentially to highly ordered alpha-glucans, such as starch and crystalline maltodextrins. Involved in the organization of the starch granule matrix, thus influencing starch turnover by modulating the accessibility of starch polymers to modifying and degrading enzymes involved in phosphorylation, hydrolyzes and synthesis, including starch synthases (SSI and SSIII), starch phosphorylases (PHS1), isoamylase, beta-amylase, glucan water dikinase (GWD) and phosphoglucan water dikinase (PWD). Prevents GWD- and PWD-mediated starch phosphorylation, and subsequent degradation. Required for the control of starch degradation in leaves and starch distribution in nonphotosynthetic parts (e.g. cells immediately adjacent to veins, columella cells of root caps, stems, flowers and siliques) by limiting the hasty depletion of starch reserves during the night. Promotes gravitropic responses, negative in shoots but positive in roots, by maintaining starch granules (statoliths) accumulation in hypocotyls and roots columella, especially in dark conditions and in the endodermis, where starch is formed from transported glucose-6-phosphates. In Arabidopsis thaliana (Mouse-ear cress), this protein is Protein EARLY STARVATION 1, chloroplastic.